The sequence spans 845 residues: Beta-galactosidase 11 (845 aa).

An N-terminal signal peptide occupies residues 1 to 26; it reads MRKHSLDRWLLTAVLVVLLSSSSSFA. Asparagine 104 carries an N-linked (GlcNAc...) asparagine glycan. The Proton donor role is filled by glutamate 197. Glutamate 268 serves as the catalytic Nucleophile. N-linked (GlcNAc...) asparagine glycans are attached at residues asparagine 269, asparagine 300, asparagine 395, asparagine 752, asparagine 784, and asparagine 814. An SUEL-type lectin domain is found at 751 to 840; the sequence is DNVSLTATLK…KMLAVQVKCG (90 aa).

The protein belongs to the glycosyl hydrolase 35 family.

The protein resides in the secreted. The protein localises to the extracellular space. It is found in the apoplast. The enzyme catalyses Hydrolysis of terminal non-reducing beta-D-galactose residues in beta-D-galactosides.. In Arabidopsis thaliana (Mouse-ear cress), this protein is Beta-galactosidase 11 (BGAL11).